The primary structure comprises 135 residues: uncharacterized protein (135 aa).

Residues 1–70 form a disordered region; it reads MKPDWPRRGA…RWRPQGTGTG (70 aa).

This is an uncharacterized protein from Homo sapiens (Human).